A 143-amino-acid polypeptide reads, in one-letter code: MSSQQNQNRQGEQQEQGYMEAAKEKVVNAWESTKETLSSTAQAAAEKTAEFRDSAGETIRDLTGQAQEKGQEFKERAGEKAEETKQRAGEKMDETKQRAGEMRENAGQKMEEYKQQGKGKAEELRDTAAEKLHQAGEKVKGRD.

Low complexity predominate over residues 1–17; it reads MSSQQNQNRQGEQQEQG. The tract at residues 1-143 is disordered; the sequence is MSSQQNQNRQ…QAGEKVKGRD (143 aa). 4 repeat units span residues 47–57, 69–79, 80–90, and 91–101. Composition is skewed to basic and acidic residues over residues 47–60 and 69–143; these read KTAEFRDSAGETIR and KGQE…KGRD. A 4 X 11 AA approximate repeats region spans residues 47 to 101; that stretch reads KTAEFRDSAGETIRDLTGQAQEKGQEFKERAGEKAEETKQRAGEKMDETKQRAGE.

It belongs to the LEA type 4 family.

Its function is as follows. May be involved in defense against water stress. This Aphelenchoides avenae (Mycophagous nematode worm) protein is Late embryogenesis abundant protein 1.